The following is a 72-amino-acid chain: Omega-conotoxin-like SVIA mutant 1 (72 aa).

The signal sequence occupies residues 1–22 (MKLTCVVIVAVLLLTACQLITA). A propeptide spanning residues 23–48 (EDSRGAQKHRTLRSTARRSKSELTTR) is cleaved from the precursor. 3 disulfide bridges follow: cysteine 49-cysteine 63, cysteine 56-cysteine 66, and cysteine 62-cysteine 71. The residue at position 55 (proline 55) is a 4-hydroxyproline.

It belongs to the conotoxin O1 superfamily. In terms of tissue distribution, expressed by the venom duct.

It is found in the secreted. In terms of biological role, omega-conotoxins act at presynaptic membranes, they bind and block voltage-gated calcium channels (Cav). This is Omega-conotoxin-like SVIA mutant 1 from Conus striatus (Striated cone).